Consider the following 90-residue polypeptide: CRISPR-associated endonuclease Cas2 2 (90 aa).

D11 contributes to the Mg(2+) binding site.

This sequence belongs to the CRISPR-associated endoribonuclease Cas2 protein family. As to quaternary structure, homodimer, forms a heterotetramer with a Cas1 homodimer. The cofactor is Mn(2+). Requires Mg(2+) as cofactor.

Inhibited by EDTA and at pH 6.0. Its function is as follows. CRISPR (clustered regularly interspaced short palindromic repeat), is an adaptive immune system that provides protection against mobile genetic elements (viruses, transposable elements and conjugative plasmids). CRISPR clusters contain sequences complementary to antecedent mobile elements and target invading nucleic acids. CRISPR clusters are transcribed and processed into CRISPR RNA (crRNA). Involved in the integration of spacer DNA into the CRISPR cassette. Functions as a dsDNA endonuclease and as a weak ssRNase. This is CRISPR-associated endonuclease Cas2 2 (cas2b) from Thermus thermophilus (strain ATCC BAA-163 / DSM 7039 / HB27).